The chain runs to 180 residues: Secreted RxLR effector protein 19 (180 aa).

The signal sequence occupies residues methionine 1 to serine 19. The Jacalin-type lectin domain occupies phenylalanine 25 to proline 171. The RxLR-dEER signature appears at arginine 52 to asparagine 77.

This sequence belongs to the RxLR effector family.

It is found in the secreted. It localises to the host cytoplasm. Its subcellular location is the host nucleus. Its function is as follows. Effector that partially suppresses the tobacco programmed cell death induced by cell death-inducing proteins. The protein is Secreted RxLR effector protein 19 of Plasmopara viticola (Downy mildew of grapevine).